Here is a 514-residue protein sequence, read N- to C-terminus: Cholesterol side-chain cleavage enzyme, mitochondrial (514 aa).

A mitochondrion-targeting transit peptide spans Met1–Asn39. Cys458 provides a ligand contact to heme.

Belongs to the cytochrome P450 family. Requires heme as cofactor. In the ovary, not found in early vitellogenic follicles, barely detected in postvitellogenic follicles and abundant in post-ovulatory follicles.

The protein localises to the mitochondrion inner membrane. The enzyme catalyses 6 reduced [adrenodoxin] + cholesterol + 3 O2 + 6 H(+) = 4-methylpentanal + pregnenolone + 6 oxidized [adrenodoxin] + 4 H2O. It participates in lipid metabolism; C21-steroid hormone metabolism. Catalyzes the side-chain cleavage reaction of cholesterol to pregnenolone, the precursor of most steroid hormones. The sequence is that of Cholesterol side-chain cleavage enzyme, mitochondrial (cyp11a1) from Oncorhynchus mykiss (Rainbow trout).